We begin with the raw amino-acid sequence, 440 residues long: MKEINSLECQWESIDDNNDTTILGDDIYFDYIISQLDIHQNWSPDIRLIRYFRKFNKESFDKISDTEYINPSFFQQRDKRFYPLNDDFYHISTGGYGIVFKMDKYVVKFVYEPNKQYSPIDTTAEYTIPKFLYNNLKGDEKKLIVCAWAMGLNYKLTFLHRLYKRVLYMLLLIIQTIDNQRLNIHHFSHKYFLKSFNEKKSDIKFVKLLSYFYPIVVQSNINVINYFTHMFHFFEHEKRANYLYDRGNIIIFPLARFSSDKVTEQMAIELGFKSIVQYVKFIFLQISLLYIKIYELPCCDNFLHVDLKPDNILIFNSDCPITIKFKKYTYVFNEPIKACLNDFDFSQVANILNKKIKNSLKIEHNWYYDFHFFIHTLLRTYPEIESDKEFSDSLEDFIMCCTKNTCEKFRLKVSILHPISFLENLITKNIFSNWINGESC.

One can recognise a Protein kinase domain in the interval 85-440; that stretch reads NDDFYHISTG…FSNWINGESC (356 aa). ATP contacts are provided by residues 91–99 and Lys115; that span reads ISTGGYGIV. Residue Asp306 is the Proton acceptor of the active site.

Belongs to the protein kinase superfamily. Ser/Thr protein kinase family. Poxviruses subfamily. Post-translationally, phosphorylated in vivo. Autophosphorylated in vitro.

The protein localises to the host endoplasmic reticulum. Its subcellular location is the host endoplasmic reticulum-Golgi intermediate compartment. It carries out the reaction L-seryl-[protein] + ATP = O-phospho-L-seryl-[protein] + ADP + H(+). The catalysed reaction is L-threonyl-[protein] + ATP = O-phospho-L-threonyl-[protein] + ADP + H(+). Functionally, essential serine-protein kinase involved in the early stage of virion morphogenesis. This Sus scrofa (Pig) protein is Serine/threonine-protein kinase 2 (OPG054).